The chain runs to 497 residues: Protein adenylyltransferase Fic (497 aa).

Residues M1–P30 form a disordered region. A helical transmembrane segment spans residues L38–F58. 2 TPR repeats span residues A123–H156 and P157–N191. An Inhibitory (S/T)XXXE(G/N) motif motif is present at residues T248–G253. ATP is bound by residues E252 and V333–H336. In terms of domain architecture, Fido spans I302–D437. H380 is a catalytic residue. Residues D384–R391, Y416–Y417, and N424 each bind ATP. The segment at G468–P497 is disordered.

Belongs to the fic family. As to quaternary structure, homodimer.

It localises to the membrane. The catalysed reaction is L-tyrosyl-[protein] + ATP = O-(5'-adenylyl)-L-tyrosyl-[protein] + diphosphate. It carries out the reaction L-threonyl-[protein] + ATP = 3-O-(5'-adenylyl)-L-threonyl-[protein] + diphosphate. It catalyses the reaction 3-O-(5'-adenylyl)-L-threonyl-[protein] + H2O = L-threonyl-[protein] + AMP + H(+). The side chain of Glu-252 determines which of the two opposing activities (AMPylase or de-AMPylase) will take place. In response to endoplasmic reticulum stress, mediates de-AMPylase activity. Adenylyltransferase activity is inhibited by the inhibitory helix present at the N-terminus: Glu-252 binds ATP and competes with ATP-binding at Arg-391, thereby preventing adenylyltransferase activity. In unstressed cells, disengagement of Glu-252 promotes adenylyltransferase activity. Activation dissociates ATP-binding from Glu-252, allowing ordered binding of the entire ATP moiety with the alpha-phosphate in an orientation that is productive for accepting an incoming target hydroxyl side chain. Its function is as follows. Protein that can both mediate the addition of adenosine 5'-monophosphate (AMP) to specific residues of target proteins (AMPylation), and the removal of the same modification from target proteins (de-AMPylation), depending on the context. The side chain of Glu-252 determines which of the two opposing activities (AMPylase or de-AMPylase) will take place. Acts as a key regulator of the unfolded protein response (UPR) by mediating AMPylation or de-AMPylation of Hsc70-3/BiP. In unstressed cells, acts as an adenylyltransferase by mediating AMPylation of Hsc70-3/BiP at 'Thr-518', thereby inactivating it. In response to endoplasmic reticulum stress, acts as a phosphodiesterase by mediating removal of ATP (de-AMPylation) from Hsc70-3/BiP at 'Thr-518', leading to restore HSPA5/BiP activity. This chain is Protein adenylyltransferase Fic, found in Drosophila ananassae (Fruit fly).